Here is a 459-residue protein sequence, read N- to C-terminus: Probable acetate kinase (459 aa).

Asn9 contacts Mg(2+). Lys16 lines the ATP pocket. Arg100 contributes to the substrate binding site. Asp156 (proton donor/acceptor) is an active-site residue. ATP contacts are provided by residues 216–220 (HLGSG) and 299–301 (DFR). Residues 308 to 338 (TTTSSPTPSPNPNPNPNPDPNPDPNPDPQNQ) are disordered. The segment covering 314 to 334 (TPSPNPNPNPNPDPNPDPNPD) has biased composition (pro residues). Glu441 contacts Mg(2+).

It belongs to the acetokinase family. The cofactor is Mg(2+).

It catalyses the reaction acetate + ATP = acetyl phosphate + ADP. The protein operates within metabolic intermediate biosynthesis; acetyl-CoA biosynthesis; acetyl-CoA from acetate: step 1/2. This is Probable acetate kinase from Chaetomium globosum (strain ATCC 6205 / CBS 148.51 / DSM 1962 / NBRC 6347 / NRRL 1970) (Soil fungus).